A 598-amino-acid polypeptide reads, in one-letter code: Arginine--tRNA ligase (598 aa).

Residues 139-149 (ANPTGPMHVGH) carry the 'HIGH' region motif.

Belongs to the class-I aminoacyl-tRNA synthetase family. As to quaternary structure, monomer.

It localises to the cytoplasm. It carries out the reaction tRNA(Arg) + L-arginine + ATP = L-arginyl-tRNA(Arg) + AMP + diphosphate. The polypeptide is Arginine--tRNA ligase (Bradyrhizobium sp. (strain BTAi1 / ATCC BAA-1182)).